The following is an 86-amino-acid chain: Small ribosomal subunit protein bS20 (86 aa).

The segment at 1–27 is disordered; it reads MANSKQAKKRAGQSEKRRQHNASRRSM.

Belongs to the bacterial ribosomal protein bS20 family.

Its function is as follows. Binds directly to 16S ribosomal RNA. This chain is Small ribosomal subunit protein bS20, found in Colwellia psychrerythraea (strain 34H / ATCC BAA-681) (Vibrio psychroerythus).